The chain runs to 55 residues: Serine protease inhibitor Kazal-type 1 (55 aa).

In terms of domain architecture, Kazal-like spans 2–55 (QGRDANCNYEFPGCPRNLEPVCGTDGNTYNNECLLCMENKKRDVPIRIQKDGPC). 3 cysteine pairs are disulfide-bonded: Cys8/Cys37, Cys15/Cys34, and Cys23/Cys55.

The protein localises to the secreted. Its function is as follows. Serine protease inhibitor which exhibits anti-trypsin activity. In the pancreas, protects against trypsin-catalyzed premature activation of zymogens. In the male reproductive tract, binds to sperm heads where it modulates sperm capacitance by inhibiting calcium uptake and nitrogen oxide (NO) production. This chain is Serine protease inhibitor Kazal-type 1 (SPINK1), found in Monodelphis domestica (Gray short-tailed opossum).